The primary structure comprises 310 residues: Homoserine kinase (310 aa).

91–101 (PLARGLGSSAA) serves as a coordination point for ATP.

It belongs to the GHMP kinase family. Homoserine kinase subfamily.

It localises to the cytoplasm. It carries out the reaction L-homoserine + ATP = O-phospho-L-homoserine + ADP + H(+). The protein operates within amino-acid biosynthesis; L-threonine biosynthesis; L-threonine from L-aspartate: step 4/5. In terms of biological role, catalyzes the ATP-dependent phosphorylation of L-homoserine to L-homoserine phosphate. The chain is Homoserine kinase from Bacillus pumilus (strain SAFR-032).